The sequence spans 359 residues: Peptide chain release factor 1 (359 aa).

Gln236 carries the post-translational modification N5-methylglutamine.

Belongs to the prokaryotic/mitochondrial release factor family. Post-translationally, methylated by PrmC. Methylation increases the termination efficiency of RF1.

The protein resides in the cytoplasm. Its function is as follows. Peptide chain release factor 1 directs the termination of translation in response to the peptide chain termination codons UAG and UAA. This is Peptide chain release factor 1 from Streptococcus pneumoniae (strain Hungary19A-6).